The chain runs to 144 residues: Maximins 3/H11 type 1 (144 aa).

A signal peptide spans 1–18 (MNFKYIVAVSFLIASAYA). Propeptides lie at residues 19–43 (RSVQ…REIR) and 73–122 (RTAE…KKEK). The residue at position 143 (Ile-143) is an Isoleucine amide.

Belongs to the bombinin family. In terms of tissue distribution, expressed by the skin glands.

It localises to the secreted. Maximin-3 shows antibacterial activity against both Gram-positive and Gram-negative bacteria. It also shows antimicrobial activity against the fungus C.albicans, but not against A.flavus nor P.uticale. It has little hemolytic activity. It possess a significant cytotoxicity against tumor cell lines. It possess a significant anti-HIV activity. It shows high spermicidal activity. Functionally, maximin-H11 shows antimicrobial activity against bacteria and against the fungus C.albicans. Shows strong hemolytic activity. This Bombina maxima (Giant fire-bellied toad) protein is Maximins 3/H11 type 1.